The primary structure comprises 394 residues: NAD(P)H-quinone oxidoreductase subunit H (394 aa).

This sequence belongs to the complex I 49 kDa subunit family. NDH-1 can be composed of about 15 different subunits; different subcomplexes with different compositions have been identified which probably have different functions.

Its subcellular location is the cellular thylakoid membrane. The catalysed reaction is a plastoquinone + NADH + (n+1) H(+)(in) = a plastoquinol + NAD(+) + n H(+)(out). The enzyme catalyses a plastoquinone + NADPH + (n+1) H(+)(in) = a plastoquinol + NADP(+) + n H(+)(out). Its function is as follows. NDH-1 shuttles electrons from an unknown electron donor, via FMN and iron-sulfur (Fe-S) centers, to quinones in the respiratory and/or the photosynthetic chain. The immediate electron acceptor for the enzyme in this species is believed to be plastoquinone. Couples the redox reaction to proton translocation, and thus conserves the redox energy in a proton gradient. Cyanobacterial NDH-1 also plays a role in inorganic carbon-concentration. The protein is NAD(P)H-quinone oxidoreductase subunit H of Prochlorococcus marinus (strain MIT 9211).